The primary structure comprises 233 residues: Pyridoxal 5'-phosphate synthase subunit PdxT (233 aa).

Residue 61–63 (GES) coordinates L-glutamine. Cys-93 (nucleophile) is an active-site residue. Residues Arg-127 and 163-164 (IR) contribute to the L-glutamine site. Active-site charge relay system residues include His-212 and Glu-214.

This sequence belongs to the glutaminase PdxT/SNO family. As to quaternary structure, in the presence of PdxS, forms a dodecamer of heterodimers. Only shows activity in the heterodimer.

The enzyme catalyses aldehydo-D-ribose 5-phosphate + D-glyceraldehyde 3-phosphate + L-glutamine = pyridoxal 5'-phosphate + L-glutamate + phosphate + 3 H2O + H(+). It carries out the reaction L-glutamine + H2O = L-glutamate + NH4(+). It functions in the pathway cofactor biosynthesis; pyridoxal 5'-phosphate biosynthesis. Functionally, catalyzes the hydrolysis of glutamine to glutamate and ammonia as part of the biosynthesis of pyridoxal 5'-phosphate. The resulting ammonia molecule is channeled to the active site of PdxS. This Paenarthrobacter aurescens (strain TC1) protein is Pyridoxal 5'-phosphate synthase subunit PdxT.